Here is an 863-residue protein sequence, read N- to C-terminus: MLGGLKDKLTGKNGNKIKGLAVLMSRKLLDPRDFTASLLDNVHEVFGNSITCQLVSATVADQNNEGRGIVGSEANLEQGLTDLPSVSQGESKLTVRFNWEMDKHGVPGAIIIKNHHSTKFFLKTITLHDVPGCDTIVFVANSWIYPVGKYHYNRIFFANNSYLPSQMPEALRPYREDELRYLRGEDRQGPYQEHDRIYRYDVYNDLGEPDRDNPRPVLGGSQKHPYPRRGRTGRIPTKKDPNSESRLSLLEQIYVPSDERFAHLKMSDFAGYSIKAIVQGILPAIRTYVDLTPGEFDSFEDILKLYRGGLKLPSIPALEELRKSFPVQLIKDLLPVGGSYLLKFPKPDIIKENEVAWRTDEEFAREILAGLNPMVIRRLTEFPPKSTLDPSKYGDQTSTITPAHIEKNLEGLSVQQALDSNRLYILDHHDHFMPFLIDINSLDGIFTYATRTLLFLRDDDTLKPLAIELSLPHIEGNLTSAKSKVHTPASSGIESWVWQLAKAYVAVNDSGWHQLISHWLNTHAVMEPFVIATNRQLSVTHPVYKLLQPHYRDTMTINALARQTLINGGGIFEQTVFPGKHALAMSSAVYKNWNFTEQGLPDDLIKRGIAIKDPSSPSKVKLLIKDYPYATDGLAIWQAIEQWVTEYCAIYYPNDGVLQGDVELQAWWKEVREVGHGDLKDADWWPKMQSLPELTKACTTIIWIASALHAAVNFGQYPYAGYLPNRPTISRRPMPEPGSKEYTELDENPEKFFIRTITSQFQTILGVSLIEILSKHSADEIYLGQRDTPEWTSDPKALEAFKRFSRQLVEIESKVLNMNKDPLLKNRVGPANFPYTLMFPNTSDNKGAAEGITARGIPNSISI.

The 127-residue stretch at arginine 32 to alanine 158 folds into the PLAT domain. Residues serine 161 to isoleucine 863 enclose the Lipoxygenase domain. The disordered stretch occupies residues asparagine 204–glutamate 244. Fe cation contacts are provided by histidine 518, histidine 523, histidine 709, asparagine 713, and isoleucine 863.

Belongs to the lipoxygenase family. In terms of assembly, monomer. It depends on Fe cation as a cofactor.

The protein resides in the cytoplasm. It carries out the reaction (9Z,12Z)-octadecadienoate + O2 = (9S)-hydroperoxy-(10E,12Z)-octadecadienoate. It participates in lipid metabolism; oxylipin biosynthesis. In terms of biological role, plant lipoxygenase may be involved in a number of diverse aspects of plant physiology including growth and development, pest resistance, and senescence or responses to wounding. This lipoxygenase introduces molecular oxygen exclusively into the C-9 position of linoleic and linolenic. This Oryza sativa subsp. japonica (Rice) protein is Linoleate 9S-lipoxygenase 1.